The sequence spans 127 residues: Small ribosomal subunit protein uS11 (127 aa).

Belongs to the universal ribosomal protein uS11 family. In terms of assembly, part of the 30S ribosomal subunit. Interacts with proteins S7 and S18. Binds to IF-3.

Its function is as follows. Located on the platform of the 30S subunit, it bridges several disparate RNA helices of the 16S rRNA. Forms part of the Shine-Dalgarno cleft in the 70S ribosome. This chain is Small ribosomal subunit protein uS11, found in Flavobacterium psychrophilum (strain ATCC 49511 / DSM 21280 / CIP 103535 / JIP02/86).